The chain runs to 204 residues: MAAANPWDPASAPNGAGLVLGHFIASGMVNQKNLEIELLKLEKDTADVVHPFFLAQKCHTLQSMNNHLEAVLKEKRSLRQRLLKPMCQENLPIEAVYHRYMVHLLELAVTFIERLETHLETIRNIPHLAANLKKMNQALAKMDILVTETEELAENILKWRKQQNEVSSCIPKILAEESYLYKHDIIMPPLPFTSKVHVQTINAK.

Residues 54–84 are a coiled coil; it reads LAQKCHTLQSMNNHLEAVLKEKRSLRQRLLK.

Belongs to the HAUS2 family. In terms of assembly, component of the HAUS augmin-like complex. The complex interacts with the gamma-tubulin ring complex and this interaction is required for spindle assembly. Interacts with EML3 (phosphorylated form).

The protein resides in the cytoplasm. The protein localises to the cytoskeleton. Its subcellular location is the microtubule organizing center. It localises to the centrosome. It is found in the spindle. The polypeptide is HAUS augmin-like complex subunit 2 (HAUS2) (Pongo abelii (Sumatran orangutan)).